Consider the following 147-residue polypeptide: Large ribosomal subunit protein uL15 (147 aa).

The tract at residues 1–57 (MDLSNLSPAPGSTKARKRLGRGPGSGNGTTAGRGNKGHNSRSGGGVRPGFEGGQMPL) is disordered. Gly residues-rich tracts occupy residues 21–31 (RGPGSGNGTTA) and 42–52 (SGGGVRPGFEG).

It belongs to the universal ribosomal protein uL15 family. As to quaternary structure, part of the 50S ribosomal subunit.

In terms of biological role, binds to the 23S rRNA. This chain is Large ribosomal subunit protein uL15, found in Desulfosudis oleivorans (strain DSM 6200 / JCM 39069 / Hxd3) (Desulfococcus oleovorans).